The sequence spans 213 residues: ATP synthase peripheral stalk subunit OSCP, mitochondrial (213 aa).

Residues 1–23 constitute a mitochondrion transit peptide; the sequence is MAAPAVSGLSRQVRYFSTSVVRP. The SIFI-degron motif lies at 5–23; sequence AVSGLSRQVRYFSTSVVRP. An N6-acetyllysine mark is found at lysine 54, lysine 60, lysine 70, and lysine 73. Lysine 90 is modified (N6-succinyllysine). 2 positions are modified to N6-acetyllysine; alternate: lysine 158 and lysine 162. Lysine 158 and lysine 162 each carry N6-succinyllysine; alternate. N6-acetyllysine is present on residues lysine 172, lysine 176, and lysine 192. The residue at position 199 (lysine 199) is an N6-succinyllysine.

This sequence belongs to the ATPase delta chain family. Component of the ATP synthase complex composed at least of ATP5F1A/subunit alpha, ATP5F1B/subunit beta, ATP5MC1/subunit c (homooctomer), MT-ATP6/subunit a, MT-ATP8/subunit 8, ATP5ME/subunit e, ATP5MF/subunit f, ATP5MG/subunit g, ATP5MK/subunit k, ATP5MJ/subunit j, ATP5F1C/subunit gamma, ATP5F1D/subunit delta, ATP5F1E/subunit epsilon, ATP5PF/subunit F6, ATP5PB/subunit b, ATP5PD/subunit d, ATP5PO/subunit OSCP. ATP synthase complex consists of a soluble F(1) head domain (subunits alpha(3) and beta(3)) - the catalytic core - and a membrane F(0) domain - the membrane proton channel (subunits c, a, 8, e, f, g, k and j). These two domains are linked by a central stalk (subunits gamma, delta, and epsilon) rotating inside the F1 region and a stationary peripheral stalk (subunits F6, b, d, and OSCP). In terms of processing, acetylation at Lys-162 decreases ATP production. Deacetylated by SIRT3. Post-translationally, in response to mitochondrial stress, the precursor protein is ubiquitinated by the SIFI complex in the cytoplasm before mitochondrial import, leading to its degradation. Within the SIFI complex, UBR4 initiates ubiquitin chain that are further elongated or branched by KCMF1.

It localises to the mitochondrion. Its subcellular location is the mitochondrion inner membrane. Its function is as follows. Subunit OSCP, of the mitochondrial membrane ATP synthase complex (F(1)F(0) ATP synthase or Complex V) that produces ATP from ADP in the presence of a proton gradient across the membrane which is generated by electron transport complexes of the respiratory chain. ATP synthase complex consist of a soluble F(1) head domain - the catalytic core - and a membrane F(1) domain - the membrane proton channel. These two domains are linked by a central stalk rotating inside the F(1) region and a stationary peripheral stalk. During catalysis, ATP synthesis in the catalytic domain of F(1) is coupled via a rotary mechanism of the central stalk subunits to proton translocation. In vivo, can only synthesize ATP although its ATP hydrolase activity can be activated artificially in vitro. Part of the complex F(0) domain. Part of the complex F(0) domain and the peripheric stalk, which acts as a stator to hold the catalytic alpha(3)beta(3) subcomplex and subunit a/ATP6 static relative to the rotary elements. The chain is ATP synthase peripheral stalk subunit OSCP, mitochondrial from Plecturocebus moloch (Dusky titi monkey).